The chain runs to 379 residues: Isocitrate dehydrogenase [NAD] subunit 2, mitochondrial (379 aa).

The N-terminal 27 residues, 1–27 (MSMLSTLRTAGSLRTFSRSACYSFQRF), are a transit peptide targeting the mitochondrion. Substrate-binding residues include Arg-129, Arg-139, Arg-160, and Asp-247. Mg(2+) contacts are provided by Asp-247, Asp-273, and Asp-277.

This sequence belongs to the isocitrate and isopropylmalate dehydrogenases family. Octamer of two non-identical subunits IDH1 and IDH2. Mg(2+) serves as cofactor. It depends on Mn(2+) as a cofactor.

It is found in the mitochondrion. The catalysed reaction is D-threo-isocitrate + NAD(+) = 2-oxoglutarate + CO2 + NADH. In terms of biological role, performs an essential role in the oxidative function of the citric acid cycle and is involved in glutamate biosynthesis. Also binds RNA; specifically to the 5'-untranslated leaders of mitochondrial mRNAs. This Schizosaccharomyces pombe (strain 972 / ATCC 24843) (Fission yeast) protein is Isocitrate dehydrogenase [NAD] subunit 2, mitochondrial (idh2).